A 298-amino-acid polypeptide reads, in one-letter code: HTH-type transcriptional regulator ArgP (298 aa).

An HTH lysR-type domain is found at 4-60 (LDYKWIEALDAVVYQGSFERAAEHLFVSQSAISQRIKQLEKFLAQPVLIREQPPKPT). Positions 21–40 (FERAAEHLFVSQSAISQRIK) form a DNA-binding region, H-T-H motif.

The protein belongs to the LysR transcriptional regulatory family. Homodimer.

Functionally, controls the transcription of genes involved in arginine and lysine metabolism. The chain is HTH-type transcriptional regulator ArgP from Vibrio parahaemolyticus serotype O3:K6 (strain RIMD 2210633).